The chain runs to 172 residues: 3-hydroxydecanoyl-[acyl-carrier-protein] dehydratase (172 aa).

His-71 is an active-site residue.

This sequence belongs to the thioester dehydratase family. FabA subfamily. Homodimer.

The protein resides in the cytoplasm. It catalyses the reaction a (3R)-hydroxyacyl-[ACP] = a (2E)-enoyl-[ACP] + H2O. The enzyme catalyses (3R)-hydroxydecanoyl-[ACP] = (2E)-decenoyl-[ACP] + H2O. It carries out the reaction (2E)-decenoyl-[ACP] = (3Z)-decenoyl-[ACP]. The protein operates within lipid metabolism; fatty acid biosynthesis. Its function is as follows. Necessary for the introduction of cis unsaturation into fatty acids. Catalyzes the dehydration of (3R)-3-hydroxydecanoyl-ACP to E-(2)-decenoyl-ACP and then its isomerization to Z-(3)-decenoyl-ACP. Can catalyze the dehydratase reaction for beta-hydroxyacyl-ACPs with saturated chain lengths up to 16:0, being most active on intermediate chain length. This chain is 3-hydroxydecanoyl-[acyl-carrier-protein] dehydratase, found in Proteus mirabilis (strain HI4320).